A 319-amino-acid polypeptide reads, in one-letter code: Putative antiporter CaxA (319 aa).

The next 10 membrane-spanning stretches (helical) occupy residues 3-23 (VATIFVLVGLVLLIWSADRFV), 38-58 (MIIGLTIVAMGSSAPEIMVSA), 81-101 (ILLVIGATALLKPIAVASMTI), 105-125 (FPLLILVTLLGYLFLADQSLT), 127-147 (AEGALFLGGFVLFLVLMVYWG), 175-195 (VWLVLGLALLLASSQLLVHGA), 208-228 (LIGLTIIAIGTSLPELAASLI), 250-270 (ILAVLGVGTIIAPGVIDAAAA), 275-292 (YVMMAATLALLLMSLRLG), and 297-317 (INRVEGCILLMAFIGYQYLLF).

The protein belongs to the Ca(2+):cation antiporter (CaCA) (TC 2.A.19) family.

It is found in the cell membrane. Functionally, confers modest Ca(2+) and Na(+) resistance. The sequence is that of Putative antiporter CaxA (caxA) from Alkalimonas amylolytica.